We begin with the raw amino-acid sequence, 263 residues long: Translation initiation factor 2 subunit alpha (263 aa).

The 72-residue stretch at 12–83 folds into the S1 motif domain; the sequence is GEILIATVKQ…RKGTIDVSLK (72 aa).

Belongs to the eIF-2-alpha family. As to quaternary structure, heterotrimer composed of an alpha, a beta and a gamma chain.

In terms of biological role, eIF-2 functions in the early steps of protein synthesis by forming a ternary complex with GTP and initiator tRNA. In Sulfurisphaera tokodaii (strain DSM 16993 / JCM 10545 / NBRC 100140 / 7) (Sulfolobus tokodaii), this protein is Translation initiation factor 2 subunit alpha.